A 211-amino-acid chain; its full sequence is NADH-quinone oxidoreductase subunit I (211 aa).

The disordered stretch occupies residues 1–27; sequence MANTDRPALPHKRAVPPSRADSGPRRR. 2 consecutive 4Fe-4S ferredoxin-type domains span residues 71–101 and 117–146; these read LNRY…VEGA and RVYQ…MTYD. Residues Cys81, Cys84, Cys87, Cys91, Cys126, Cys129, Cys132, and Cys136 each contribute to the [4Fe-4S] cluster site.

It belongs to the complex I 23 kDa subunit family. In terms of assembly, NDH-1 is composed of 14 different subunits. Subunits NuoA, H, J, K, L, M, N constitute the membrane sector of the complex. The cofactor is [4Fe-4S] cluster.

The protein resides in the cell membrane. The catalysed reaction is a quinone + NADH + 5 H(+)(in) = a quinol + NAD(+) + 4 H(+)(out). Its function is as follows. NDH-1 shuttles electrons from NADH, via FMN and iron-sulfur (Fe-S) centers, to quinones in the respiratory chain. The immediate electron acceptor for the enzyme in this species is believed to be menaquinone. Couples the redox reaction to proton translocation (for every two electrons transferred, four hydrogen ions are translocated across the cytoplasmic membrane), and thus conserves the redox energy in a proton gradient. This chain is NADH-quinone oxidoreductase subunit I, found in Mycobacterium tuberculosis (strain ATCC 25177 / H37Ra).